Reading from the N-terminus, the 66-residue chain is Nigrocin-2ISa (66 aa).

Positions 1 to 22 (MFTLKKSMLLLFFLGTINLSLC) are cleaved as a signal peptide. A propeptide spans 23-43 (QEERDAEEERRDEDNAKMEEI) (removed in mature form). A disulfide bridge links Cys-60 with Cys-66.

Expressed by the skin glands.

Its subcellular location is the secreted. Functionally, has antimicrobial activity against Gram-negative bacterium E.coli ATCC 8739 (MIC=25 ug), against Gram positive bacteria S.aureus ATCC 6538 (MIC=3.1 ug), methicillin-resistant S.aureus ATCC 43300 (MIC=12.5 ug), B.subtilis ATCC 6633 (MIC=12.5 ug) and against fungus C.albicans ATCC 90028 (MIC=50 ug). The protein is Nigrocin-2ISa of Odorrana ishikawae (Ishikawa's frog).